The sequence spans 438 residues: 3-phosphoshikimate 1-carboxyvinyltransferase (438 aa).

3 residues coordinate 3-phosphoshikimate: K21, S22, and R26. K21 contacts phosphoenolpyruvate. The phosphoenolpyruvate site is built by G95 and R123. S167, Q169, D315, and K342 together coordinate 3-phosphoshikimate. Q169 provides a ligand contact to phosphoenolpyruvate. D315 (proton acceptor) is an active-site residue. Phosphoenolpyruvate is bound by residues R346 and R387.

The protein belongs to the EPSP synthase family. Monomer.

It is found in the cytoplasm. The enzyme catalyses 3-phosphoshikimate + phosphoenolpyruvate = 5-O-(1-carboxyvinyl)-3-phosphoshikimate + phosphate. Its pathway is metabolic intermediate biosynthesis; chorismate biosynthesis; chorismate from D-erythrose 4-phosphate and phosphoenolpyruvate: step 6/7. Its function is as follows. Catalyzes the transfer of the enolpyruvyl moiety of phosphoenolpyruvate (PEP) to the 5-hydroxyl of shikimate-3-phosphate (S3P) to produce enolpyruvyl shikimate-3-phosphate and inorganic phosphate. The sequence is that of 3-phosphoshikimate 1-carboxyvinyltransferase from Coxiella burnetii (strain RSA 331 / Henzerling II).